The chain runs to 471 residues: Glutamate--tRNA ligase (471 aa).

The 'HIGH' region signature appears at 10–20 (PSPTGYLHIGG). Residues Cys-107, Cys-109, Cys-134, and Glu-136 each contribute to the Zn(2+) site. The 'KMSKS' region motif lies at 244–248 (RLSKR). Lys-247 is a binding site for ATP.

It belongs to the class-I aminoacyl-tRNA synthetase family. Glutamate--tRNA ligase type 1 subfamily. As to quaternary structure, monomer. The cofactor is Zn(2+).

The protein resides in the cytoplasm. The enzyme catalyses tRNA(Glu) + L-glutamate + ATP = L-glutamyl-tRNA(Glu) + AMP + diphosphate. Catalyzes the attachment of glutamate to tRNA(Glu) in a two-step reaction: glutamate is first activated by ATP to form Glu-AMP and then transferred to the acceptor end of tRNA(Glu). This chain is Glutamate--tRNA ligase, found in Anaeromyxobacter sp. (strain Fw109-5).